The chain runs to 173 residues: Putative pre-16S rRNA nuclease (173 aa).

Belongs to the YqgF nuclease family.

It is found in the cytoplasm. Functionally, could be a nuclease involved in processing of the 5'-end of pre-16S rRNA. The sequence is that of Putative pre-16S rRNA nuclease from Rhodopirellula baltica (strain DSM 10527 / NCIMB 13988 / SH1).